A 448-amino-acid polypeptide reads, in one-letter code: Gamete and mating-type specific protein A (448 aa).

The signal sequence occupies residues 1–19 (MKLILVLLCLISTLFVVKG). The region spanning 30-157 (VSYHNKWRSS…PDKSEVSCSY (128 aa)) is the SCP domain. 3 N-linked (GlcNAc...) asparagine glycosylation sites follow: N55, N98, and N119. The tract at residues 171-242 (PKTTTPAPTT…PTTPAPTSTL (72 aa)) is disordered. Residues 178–236 (PTTPAPTTPKPTTPAPTTPKPTTPAPTTPKPTTPAPTTPKPTTPAPTTPKPTTPAPTTP) show a composition bias toward pro residues. Active-site residues include C262, H397, and N415.

This sequence belongs to the peptidase C1 family.

It is found in the secreted. In terms of biological role, thiol protease that seems to be involved in the sexual development. This is Gamete and mating-type specific protein A (gmsA) from Dictyostelium discoideum (Social amoeba).